An 86-amino-acid chain; its full sequence is Exodeoxyribonuclease 7 small subunit (86 aa).

The tract at residues M1–S26 is disordered.

This sequence belongs to the XseB family. As to quaternary structure, heterooligomer composed of large and small subunits.

The protein localises to the cytoplasm. It catalyses the reaction Exonucleolytic cleavage in either 5'- to 3'- or 3'- to 5'-direction to yield nucleoside 5'-phosphates.. Its function is as follows. Bidirectionally degrades single-stranded DNA into large acid-insoluble oligonucleotides, which are then degraded further into small acid-soluble oligonucleotides. The polypeptide is Exodeoxyribonuclease 7 small subunit (Helicobacter pylori (strain ATCC 700392 / 26695) (Campylobacter pylori)).